The sequence spans 200 residues: Acyl-homoserine-lactone synthase (200 aa).

This sequence belongs to the autoinducer synthase family.

The enzyme catalyses a fatty acyl-[ACP] + S-adenosyl-L-methionine = an N-acyl-L-homoserine lactone + S-methyl-5'-thioadenosine + holo-[ACP] + H(+). In terms of biological role, required for the synthesis of BHL (N-butanoyl-L-homoserine lactone). In Serratia liquefaciens, this protein is Acyl-homoserine-lactone synthase (swrI).